The primary structure comprises 338 residues: Lipoate-protein ligase A (338 aa).

Residues 29–216 (PATQRVLFLW…AFFAHYGERV (188 aa)) form the BPL/LPL catalytic domain. ATP contacts are provided by residues Arg-71, 76–79 (GAVF), and Lys-134. Position 134 (Lys-134) interacts with (R)-lipoate.

The protein belongs to the LplA family. In terms of assembly, monomer.

The protein resides in the cytoplasm. It carries out the reaction L-lysyl-[lipoyl-carrier protein] + (R)-lipoate + ATP = N(6)-[(R)-lipoyl]-L-lysyl-[lipoyl-carrier protein] + AMP + diphosphate + H(+). Its pathway is protein modification; protein lipoylation via exogenous pathway; protein N(6)-(lipoyl)lysine from lipoate: step 1/2. It participates in protein modification; protein lipoylation via exogenous pathway; protein N(6)-(lipoyl)lysine from lipoate: step 2/2. Catalyzes both the ATP-dependent activation of exogenously supplied lipoate to lipoyl-AMP and the transfer of the activated lipoyl onto the lipoyl domains of lipoate-dependent enzymes. The polypeptide is Lipoate-protein ligase A (Escherichia coli (strain SMS-3-5 / SECEC)).